Consider the following 142-residue polypeptide: Transcription antitermination protein NusB (142 aa).

It belongs to the NusB family.

Its function is as follows. Involved in transcription antitermination. Required for transcription of ribosomal RNA (rRNA) genes. Binds specifically to the boxA antiterminator sequence of the ribosomal RNA (rrn) operons. The protein is Transcription antitermination protein NusB of Thermobifida fusca (strain YX).